The primary structure comprises 39 residues: Cecropin (39 aa).

Its subcellular location is the secreted. In terms of biological role, antibacterial peptide active against Gram-negative bacterium E.coli. Has no activity against Gram-positive bacterium M.luteus. Weakly active against M.luteus. The chain is Cecropin from Calliphora vicina (Blue blowfly).